The following is a 156-amino-acid chain: Small ribosomal subunit protein uS7 (156 aa).

Belongs to the universal ribosomal protein uS7 family. Part of the 30S ribosomal subunit. Contacts proteins S9 and S11.

Its function is as follows. One of the primary rRNA binding proteins, it binds directly to 16S rRNA where it nucleates assembly of the head domain of the 30S subunit. Is located at the subunit interface close to the decoding center, probably blocks exit of the E-site tRNA. The sequence is that of Small ribosomal subunit protein uS7 from Mesomycoplasma hyopneumoniae (strain 232) (Mycoplasma hyopneumoniae).